The sequence spans 360 residues: Peptide chain release factor 1 (360 aa).

Gln235 carries the N5-methylglutamine modification.

The protein belongs to the prokaryotic/mitochondrial release factor family. Post-translationally, methylated by PrmC. Methylation increases the termination efficiency of RF1.

Its subcellular location is the cytoplasm. Functionally, peptide chain release factor 1 directs the termination of translation in response to the peptide chain termination codons UAG and UAA. This is Peptide chain release factor 1 from Burkholderia cenocepacia (strain HI2424).